The chain runs to 741 residues: NAD(P)H-quinone oxidoreductase subunit 5, chloroplastic (741 aa).

The next 14 membrane-spanning stretches (helical) occupy residues 9–29, 40–60, 89–109, 122–139, 147–167, 185–205, 219–239, 258–278, 280–300, 396–416, 425–445, 544–564, 603–623, and 719–739; these read WIIP…LLLV, WAFP…DLSI, IDPL…MVLI, LRFF…LGLV, IHIF…FWFT, GDFG…SLEF, NGVN…GAVA, TPIS…FLVA, LLPI…LGII, TTFL…CFWS, WLYS…TAFY, LFPL…GIPF, IYSV…YGSV, and YLFV…FYFL.

The protein belongs to the complex I subunit 5 family. In terms of assembly, NDH is composed of at least 16 different subunits, 5 of which are encoded in the nucleus.

The protein resides in the plastid. Its subcellular location is the chloroplast thylakoid membrane. It carries out the reaction a plastoquinone + NADH + (n+1) H(+)(in) = a plastoquinol + NAD(+) + n H(+)(out). The enzyme catalyses a plastoquinone + NADPH + (n+1) H(+)(in) = a plastoquinol + NADP(+) + n H(+)(out). In terms of biological role, NDH shuttles electrons from NAD(P)H:plastoquinone, via FMN and iron-sulfur (Fe-S) centers, to quinones in the photosynthetic chain and possibly in a chloroplast respiratory chain. The immediate electron acceptor for the enzyme in this species is believed to be plastoquinone. Couples the redox reaction to proton translocation, and thus conserves the redox energy in a proton gradient. The sequence is that of NAD(P)H-quinone oxidoreductase subunit 5, chloroplastic (ndhF) from Liriodendron tulipifera (Tuliptree).